A 122-amino-acid polypeptide reads, in one-letter code: MIQQESRLKVADNSGAKELLCIRVLGGTRRKYAHIGDVIVCSVKSATPGGVVKKGQVVKAVVVRTTNTTRRKDGSYIKFDENAAVIIKDDKQPTGTRIFGPVARELRDKNFMKIVSLAPEVL.

It belongs to the universal ribosomal protein uL14 family. In terms of assembly, part of the 50S ribosomal subunit. Forms a cluster with proteins L3 and L19. In the 70S ribosome, L14 and L19 interact and together make contacts with the 16S rRNA in bridges B5 and B8.

Its function is as follows. Binds to 23S rRNA. Forms part of two intersubunit bridges in the 70S ribosome. This Alkaliphilus oremlandii (strain OhILAs) (Clostridium oremlandii (strain OhILAs)) protein is Large ribosomal subunit protein uL14.